Here is a 137-residue protein sequence, read N- to C-terminus: NADH-quinone oxidoreductase subunit A (137 aa).

3 helical membrane passes run 12–32 (WAFAVFLLGVCGLIAFMLGVS), 68–88 (LVAMLFVIFDVEALFLFAWAV), and 94–114 (GWVGLVGATVFITILFAGLVY).

It belongs to the complex I subunit 3 family. In terms of assembly, NDH-1 is composed of 13 different subunits. Subunits NuoA, H, J, K, L, M, N constitute the membrane sector of the complex.

The protein resides in the cell inner membrane. The catalysed reaction is a quinone + NADH + 5 H(+)(in) = a quinol + NAD(+) + 4 H(+)(out). In terms of biological role, NDH-1 shuttles electrons from NADH, via FMN and iron-sulfur (Fe-S) centers, to quinones in the respiratory chain. The immediate electron acceptor for the enzyme in this species is believed to be ubiquinone. Couples the redox reaction to proton translocation (for every two electrons transferred, four hydrogen ions are translocated across the cytoplasmic membrane), and thus conserves the redox energy in a proton gradient. The chain is NADH-quinone oxidoreductase subunit A from Ectopseudomonas mendocina (strain ymp) (Pseudomonas mendocina).